A 146-amino-acid chain; its full sequence is Microsomal glutathione S-transferase 2 (146 aa).

3 helical membrane-spanning segments follow: residues 6–26 (ILLAALSVLSACQQSYFAMQV), 59–79 (FYPIFIITLWMAGWYFNQVFA), and 111–131 (SLGVLALLTVLGAVGILNSFL).

Belongs to the MAPEG family. In terms of assembly, homotrimer.

Its subcellular location is the endoplasmic reticulum membrane. It localises to the microsome membrane. The enzyme catalyses RX + glutathione = an S-substituted glutathione + a halide anion + H(+). It catalyses the reaction 1-chloro-2,4-dinitrobenzene + glutathione = 2,4-dinitrophenyl-S-glutathione + chloride + H(+). It carries out the reaction leukotriene C4 = leukotriene A4 + glutathione. The catalysed reaction is (5S)-hydroperoxy-(6E,8Z,11Z,14Z)-eicosatetraenoate + 2 glutathione = (5S)-hydroxy-(6E,8Z,11Z,14Z)-eicosatetraenoate + glutathione disulfide + H2O. With respect to regulation, each monomer binds on GSH molecule but only one subunit is catalytically active. Catalyzes several different glutathione-dependent reactions. Catalyzes the glutathione-dependent reduction of lipid hydroperoxides, such as 5-HPETE. Has glutathione transferase activity, toward xenobiotic electrophiles, such as 1-chloro-2, 4-dinitrobenzene (CDNB). Also catalyzes the conjugation of leukotriene A4 with reduced glutathione to form leukotriene C4 (LTC4). Involved in oxidative DNA damage induced by ER stress and anticancer agents by activating LTC4 biosynthetic machinery in nonimmune cells. The sequence is that of Microsomal glutathione S-transferase 2 (MGST2) from Bos taurus (Bovine).